A 146-amino-acid polypeptide reads, in one-letter code: Aspartate carbamoyltransferase regulatory chain (146 aa).

Zn(2+) contacts are provided by Cys102, Cys107, Cys131, and Cys134.

Belongs to the PyrI family. In terms of assembly, contains catalytic and regulatory chains. It depends on Zn(2+) as a cofactor.

Involved in allosteric regulation of aspartate carbamoyltransferase. The chain is Aspartate carbamoyltransferase regulatory chain from Clostridium acetobutylicum (strain ATCC 824 / DSM 792 / JCM 1419 / IAM 19013 / LMG 5710 / NBRC 13948 / NRRL B-527 / VKM B-1787 / 2291 / W).